Reading from the N-terminus, the 235-residue chain is Small ribosomal subunit protein uS2 (235 aa).

It belongs to the universal ribosomal protein uS2 family.

The protein is Small ribosomal subunit protein uS2 of Anoxybacillus flavithermus (strain DSM 21510 / WK1).